A 579-amino-acid chain; its full sequence is Protein downstream neighbor of son homolog (579 aa).

2 disordered regions span residues 1–68 and 331–379; these read MAEL…RRNP and FSQP…DESF. Over residues 339-348 the composition is skewed to basic and acidic residues; that stretch reads DTGKKQKKPE. Positions 365–378 are enriched in acidic residues; that stretch reads EADEASDESDEDES.

Belongs to the DONSON family. In terms of assembly, component of the replisome complex.

The protein resides in the nucleus. In terms of biological role, replisome component that maintains genome stability by protecting stalled or damaged replication forks. After the induction of replication stress, required for the stabilization of stalled replication forks, the efficient activation of the intra-S-phase and G/2M cell-cycle checkpoints and the maintenance of genome stability. The chain is Protein downstream neighbor of son homolog from Xenopus laevis (African clawed frog).